The following is a 64-amino-acid chain: KDGYLVGNDGCKYSCFTRPGTYCANECSRVKGKDGYCYAWMACYCYSMPNWVKTWNRATNRCGR.

The LCN-type CS-alpha/beta domain occupies 1–63; the sequence is KDGYLVGNDG…TWNRATNRCG (63 aa). Cystine bridges form between cysteine 11-cysteine 62, cysteine 15-cysteine 37, cysteine 23-cysteine 43, and cysteine 27-cysteine 45.

The protein belongs to the long (4 C-C) scorpion toxin superfamily. Sodium channel inhibitor family. Beta subfamily. In terms of tissue distribution, expressed by the venom gland.

It is found in the secreted. In terms of biological role, shows antibacterial activity against both Gram-positive bacteria (B.subtilis, M.luteus, E.faecalis) and Gram-negative bacteria (P.aeruginosa, Y.enterocolitica, A.calcoaceticus). Modifies membrane sodium permeability on Y.enterocolitica. Is toxic to mice, but is not to crabs. Induces concentration dependent haemolysis in human erythrocytes. Acts by inhibiting the sodium (Nav) currents. The polypeptide is Bactridin-2 (Tityus discrepans (Venezuelan scorpion)).